A 128-amino-acid chain; its full sequence is Group 2 truncated hemoglobin GlbO (128 aa).

A cross-link (isodityrosine (Tyr-Tyr)) is located at residues 23–36; sequence YAQVAEDEVLRRVY. The residue at position 36 (Y36) is a 3',4'-dihydroxyphenylalanine. H75 lines the heme pocket.

The protein belongs to the truncated hemoglobin family. Group II subfamily. Homododecamer. It depends on heme as a cofactor. Contains L-DOPA (3',4'-dihydroxyphenylalanine).

The sequence is that of Group 2 truncated hemoglobin GlbO (glbO) from Mycobacterium bovis (strain ATCC BAA-935 / AF2122/97).